We begin with the raw amino-acid sequence, 213 residues long: Orotate phosphoribosyltransferase (213 aa).

Lys-25 lines the 5-phospho-alpha-D-ribose 1-diphosphate pocket. 33–34 contacts orotate; the sequence is FF. Residues 71–72, Arg-98, Lys-99, Lys-102, His-104, and 124–132 each bind 5-phospho-alpha-D-ribose 1-diphosphate; these read YK and DDVITSGTA. Residues Thr-128 and Arg-156 each coordinate orotate.

Belongs to the purine/pyrimidine phosphoribosyltransferase family. PyrE subfamily. Homodimer. Mg(2+) is required as a cofactor.

It catalyses the reaction orotidine 5'-phosphate + diphosphate = orotate + 5-phospho-alpha-D-ribose 1-diphosphate. The protein operates within pyrimidine metabolism; UMP biosynthesis via de novo pathway; UMP from orotate: step 1/2. Its function is as follows. Catalyzes the transfer of a ribosyl phosphate group from 5-phosphoribose 1-diphosphate to orotate, leading to the formation of orotidine monophosphate (OMP). This chain is Orotate phosphoribosyltransferase, found in Buchnera aphidicola subsp. Acyrthosiphon pisum (strain 5A).